The following is a 160-amino-acid chain: Transcription elongation factor GreA (160 aa).

Residues valine 14–serine 76 adopt a coiled-coil conformation.

The protein belongs to the GreA/GreB family.

Its function is as follows. Necessary for efficient RNA polymerase transcription elongation past template-encoded arresting sites. The arresting sites in DNA have the property of trapping a certain fraction of elongating RNA polymerases that pass through, resulting in locked ternary complexes. Cleavage of the nascent transcript by cleavage factors such as GreA or GreB allows the resumption of elongation from the new 3'terminus. GreA releases sequences of 2 to 3 nucleotides. The chain is Transcription elongation factor GreA from Clostridium botulinum (strain Okra / Type B1).